A 367-amino-acid chain; its full sequence is BTB/POZ domain-containing protein Tiwaz (367 aa).

Disordered stretches follow at residues 16–46 (LTVD…PRDL) and 62–87 (SSPT…SSVT). Basic and acidic residues predominate over residues 28–45 (CDMDRERERDVKALEPRD). The BTB domain maps to 135-205 (APVHIDVGGT…MRNSRLLIAE (71 aa)). A disordered region spans residues 240 to 261 (GNYLVAPPTPPARHIKTSPRTS).

Its function is as follows. Functions with the transcription factor TfAP-2 to regulate octopamine neuronal signaling pathways that control behaviors such as male aggression, male mating, and the initiation of feeding. Required for TfAP-2 transcriptional activity in octopaminergic neurons. Functions with TfAP-2 to regulate expression of genes which are involved in promoting octopamine production and secretion from octopaminergic neurons, such as Tbh and Vmat. Octopamine then modulates feeding and male aggression by regulating the expression of the satiation hormone Dsk in insulin-producing cells (IPCs). Functions with octopamine and Dsk as part of a negative feedback loop to prevent overeating; acts with TfAP-2 to regulate octopamine signaling pathways that initiate feeding, then octopamine activates expression of Dsk which inhibits consummatory behavior. May also be involved in negatively regulating nociception in larvae to prevent spontaneous pain and hyperalgesia. The chain is BTB/POZ domain-containing protein Tiwaz from Drosophila melanogaster (Fruit fly).